Consider the following 339-residue polypeptide: Leucine-rich repeat-containing protein 75A (339 aa).

The tract at residues 1–25 is disordered; sequence MGTRQTKGSLAERASPGAAPGPRRE. Residues 11 to 21 are compositionally biased toward low complexity; the sequence is AERASPGAAPG. LRR repeat units lie at residues 203–216 and 228–241; these read VDSV…LTDD and LPRL…GNRL. The tract at residues 294-339 is disordered; it reads LPTILELGEGPGTGEEAREGTDQQDPIGSPVTPARGQESTECVIQT. Phosphoserine is present on S322. A Phosphothreonine modification is found at T325. Residues 330 to 339 show a composition bias toward polar residues; it reads QESTECVIQT.

This sequence belongs to the LRRC75 family.

The chain is Leucine-rich repeat-containing protein 75A (Lrrc75a) from Mus musculus (Mouse).